We begin with the raw amino-acid sequence, 153 residues long: Histone H2B.3 (153 aa).

2 stretches are compositionally biased toward basic and acidic residues: residues 1–10 (MAPKKDEKPA) and 20–54 (AKAE…GEKK). The interval 1–60 (MAPKKDEKPATAEAGAEAPAKAEAKPKAEKAGKKAKKEPAKKAAKEPKGDGEKKDKKKKK) is disordered. 2 positions are modified to N6-acetyllysine: Lys41 and Lys42. Residue Lys149 forms a Glycyl lysine isopeptide (Lys-Gly) (interchain with G-Cter in ubiquitin) linkage.

It belongs to the histone H2B family. As to quaternary structure, the nucleosome is a histone octamer containing two molecules each of H2A, H2B, H3 and H4 assembled in one H3-H4 heterotetramer and two H2A-H2B heterodimers. The octamer wraps approximately 147 bp of DNA. In terms of processing, the N-terminus is blocked. Can be acetylated to form H2BK33ac and H2BK34ac. Acetylated mainly on the ubiquitinated form. Post-translationally, monoubiquitinated to form H2BK143ub1; which is increased during the light period and may give a specific tag for epigenetic transcriptional activation.

The protein resides in the nucleus. The protein localises to the chromosome. Functionally, core component of nucleosome. Nucleosomes wrap and compact DNA into chromatin, limiting DNA accessibility to the cellular machineries which require DNA as a template. Histones thereby play a central role in transcription regulation, DNA repair, DNA replication and chromosomal stability. DNA accessibility is regulated via a complex set of post-translational modifications of histones, also called histone code, and nucleosome remodeling. In Chlamydomonas reinhardtii (Chlamydomonas smithii), this protein is Histone H2B.3.